A 162-amino-acid polypeptide reads, in one-letter code: Iron-sulfur cluster assembly protein IscU (162 aa).

Belongs to the NifU family. In terms of assembly, homotrimer. Small proportion is monomeric. Interacts with IscS. Interacts with ABCB6. Component of a complex, at least composed of IscS, Isd11 and IscU. [4Fe-4S] cluster serves as cofactor.

Its subcellular location is the mitochondrion. The protein operates within cofactor biosynthesis; iron-sulfur cluster biosynthesis. Functionally, participates in iron-sulfur cluster formation (ISC) pathway for iron-sulfur (Fe-S) cluster biogenesis. Plays a role of a major scaffold protein for [Fe-S] assembly; assembles [4Fe-4S] clusters directly upon interaction with the catalytic component IscS-Isd11 as part of the scaffold complex. Can transfer [4Fe-4S] clusters to target apo-proteins. This Plasmodium falciparum (isolate 3D7) protein is Iron-sulfur cluster assembly protein IscU.